A 644-amino-acid polypeptide reads, in one-letter code: Exoribonuclease 2 (644 aa).

One can recognise an RNB domain in the interval 189 to 516; sequence RRDLTALNFV…NHRLLKAIVK (328 aa). The S1 motif domain occupies 561–643; that stretch reads DTRFAAEIID…ETRSIIARPV (83 aa).

Belongs to the RNR ribonuclease family. RNase II subfamily.

Its subcellular location is the cytoplasm. The enzyme catalyses Exonucleolytic cleavage in the 3'- to 5'-direction to yield nucleoside 5'-phosphates.. Involved in mRNA degradation. Hydrolyzes single-stranded polyribonucleotides processively in the 3' to 5' direction. The polypeptide is Exoribonuclease 2 (Enterobacter sp. (strain 638)).